A 428-amino-acid polypeptide reads, in one-letter code: Adenylosuccinate synthetase (428 aa).

GTP is bound by residues 12–18 and 40–42; these read GDEGKGK and GHT. D13 acts as the Proton acceptor in catalysis. Residues D13 and G40 each contribute to the Mg(2+) site. IMP-binding positions include 13–16, 38–41, T130, R144, Q225, T240, and R304; these read DEGK and NAGH. H41 acts as the Proton donor in catalysis. 300 to 306 contacts substrate; the sequence is VTTGRAR. GTP contacts are provided by residues R306, 332–334, and 414–416; these read KID and SVG.

The protein belongs to the adenylosuccinate synthetase family. Homodimer. Requires Mg(2+) as cofactor.

The protein resides in the cytoplasm. It catalyses the reaction IMP + L-aspartate + GTP = N(6)-(1,2-dicarboxyethyl)-AMP + GDP + phosphate + 2 H(+). It functions in the pathway purine metabolism; AMP biosynthesis via de novo pathway; AMP from IMP: step 1/2. Plays an important role in the de novo pathway of purine nucleotide biosynthesis. Catalyzes the first committed step in the biosynthesis of AMP from IMP. The chain is Adenylosuccinate synthetase from Clostridium botulinum (strain Loch Maree / Type A3).